Consider the following 371-residue polypeptide: Peptide chain release factor 2 (371 aa).

Gln-253 carries the post-translational modification N5-methylglutamine.

This sequence belongs to the prokaryotic/mitochondrial release factor family. Post-translationally, methylated by PrmC. Methylation increases the termination efficiency of RF2.

The protein resides in the cytoplasm. In terms of biological role, peptide chain release factor 2 directs the termination of translation in response to the peptide chain termination codons UGA and UAA. The chain is Peptide chain release factor 2 from Mycobacterium sp. (strain JLS).